The sequence spans 447 residues: Tektin-4 (447 aa).

Coiled coils occupy residues 69–144 (ADRD…ALDA) and 304–423 (FGRR…TNSL). The segment covering 72 to 81 (DQSERQRHES) has biased composition (basic and acidic residues). The disordered stretch occupies residues 72–104 (DQSERQRHESQQLAAETEALAQRTQQDSTRKVG). Residues 82–97 (QQLAAETEALAQRTQQ) are compositionally biased toward low complexity.

It belongs to the tektin family. Microtubule inner protein component of sperm flagellar doublet microtubules. Post-translationally, ubiquitinated, leading to its degradation. Deubiquitinated by USP16, promoting its stability. Expressed in trachea multiciliated cells.

The protein resides in the cytoplasm. It localises to the cytoskeleton. Its subcellular location is the cilium axoneme. It is found in the flagellum axoneme. Its function is as follows. Microtubule inner protein (MIP) part of the dynein-decorated doublet microtubules (DMTs) in cilia and flagellar axoneme. Forms filamentous polymers in the walls of ciliary and flagellar microtubules. Contributes to normal sperm motility. The polypeptide is Tektin-4 (TEKT4) (Bos taurus (Bovine)).